Here is a 363-residue protein sequence, read N- to C-terminus: MNTSSTVIKVTGESAANNYDVVVGRGLLGTLPEILGERVRRVLVIHPRALRLTGDTVRDDLESAGFTALTAEIPDAEEGKHIQVAAFCWQVLGQNDFTRSDAIVAVGGGAVTDLAGFVAATWLRGVKVIHMPTSLLGMVDASVGGKTGINTAEGKNLVGAFHPPAAVLADLDTLDTLPRNELISGMAEVVKCGFIADPAILELVEKDFAAVTDPRSETLRELIERAIAVKAKVVSEDLKESGLREILNYGHTLGHAIELVERYSWRHGAAVSVGMMFAAELARSVGRLSDADADRHRSILEGLGLPVTYRRDRWQGLLDGMRRDKKSRGDLLRFVVLDGVAKPGILDVPDTSLLFAAYQEVAS.

Residues 75 to 80 (DAEEGK), 109 to 113 (GAVTD), 133 to 134 (TS), Lys146, Lys155, and 173 to 176 (TLDT) each bind NAD(+). Residues Glu188, His251, and His267 each coordinate Zn(2+).

Belongs to the sugar phosphate cyclases superfamily. Dehydroquinate synthase family. Co(2+) is required as a cofactor. Zn(2+) serves as cofactor. The cofactor is NAD(+).

Its subcellular location is the cytoplasm. The catalysed reaction is 7-phospho-2-dehydro-3-deoxy-D-arabino-heptonate = 3-dehydroquinate + phosphate. It participates in metabolic intermediate biosynthesis; chorismate biosynthesis; chorismate from D-erythrose 4-phosphate and phosphoenolpyruvate: step 2/7. Its function is as follows. Catalyzes the conversion of 3-deoxy-D-arabino-heptulosonate 7-phosphate (DAHP) to dehydroquinate (DHQ). The protein is 3-dehydroquinate synthase of Pseudarthrobacter chlorophenolicus (strain ATCC 700700 / DSM 12829 / CIP 107037 / JCM 12360 / KCTC 9906 / NCIMB 13794 / A6) (Arthrobacter chlorophenolicus).